A 250-amino-acid polypeptide reads, in one-letter code: 3-deoxy-manno-octulosonate cytidylyltransferase (250 aa).

It belongs to the KdsB family.

It localises to the cytoplasm. The enzyme catalyses 3-deoxy-alpha-D-manno-oct-2-ulosonate + CTP = CMP-3-deoxy-beta-D-manno-octulosonate + diphosphate. Its pathway is nucleotide-sugar biosynthesis; CMP-3-deoxy-D-manno-octulosonate biosynthesis; CMP-3-deoxy-D-manno-octulosonate from 3-deoxy-D-manno-octulosonate and CTP: step 1/1. The protein operates within bacterial outer membrane biogenesis; lipopolysaccharide biosynthesis. In terms of biological role, activates KDO (a required 8-carbon sugar) for incorporation into bacterial lipopolysaccharide in Gram-negative bacteria. This is 3-deoxy-manno-octulosonate cytidylyltransferase from Geobacter sulfurreducens (strain ATCC 51573 / DSM 12127 / PCA).